Consider the following 336-residue polypeptide: DNA-directed RNA polymerase subunit alpha (336 aa).

The segment at 1 to 232 (MIQKNWQELI…DQLGVFVNFD (232 aa)) is alpha N-terminal domain (alpha-NTD). The segment at 248–336 (FNPALLKKVD…DLAKRYEDQY (89 aa)) is alpha C-terminal domain (alpha-CTD).

This sequence belongs to the RNA polymerase alpha chain family. As to quaternary structure, homodimer. The RNAP catalytic core consists of 2 alpha, 1 beta, 1 beta' and 1 omega subunit. When a sigma factor is associated with the core the holoenzyme is formed, which can initiate transcription.

It carries out the reaction RNA(n) + a ribonucleoside 5'-triphosphate = RNA(n+1) + diphosphate. Functionally, DNA-dependent RNA polymerase catalyzes the transcription of DNA into RNA using the four ribonucleoside triphosphates as substrates. In Rhizobium etli (strain CIAT 652), this protein is DNA-directed RNA polymerase subunit alpha.